The primary structure comprises 804 residues: MEPNNCKTSESEEDDIEEEESEEECVREESTTPNSTQQALRKADYKEFENGVALSVVAKKIPKKILSATDTDDLEVGRRRRKRKRRPLAINLTNCKYESVRRAAQMCGLKEVGEDEEWTVYWTDCSVSLERVMDMKRFQKINHFPGMTEICRKDLLARNLNRMQKLYPTEYNIFPRTWCLPADYGDFQAYGRQRKTRTYICKPDSGCQGRGIFITRTPKEIKPGEHMICQQYITKPFLIDGFKFDMRIYVLITSCDPLRIFMYEEGLARFATMPYVEPSHNNLEEVCMHLTNYAINKHNENFVRDDAVGSKRKLSTLNAWLREHSHDPQELWGDIEDIIIKTIISAHSVLRHNYRTCFPQYLCGGTCACFEILGFDILLDHKLKPWLLEVNHSPSFTTDSRLDREVKDALLCDAMNLVNLRGCDKKKVIEEDKRRVKERLFPCHQQPRETRREQFELSQAAMHDQERYEDSHLGGYRRIYPGPDSEKYAPFFKHNGSLFQETAASKAREECARQQLEEIRLKQEQQENPGTKKRKENKEQNQGESAGEKSRSRTATRVLATSLAYRNRNREKELLPVQLDTTQPQDIVEEEELERMKLLLQRENLIRSLGIVEQLTRMLYPSHRSHRKLHEYRPRFHQDGLSSQELQPVNLVPLVLLRGAASEQIPPHFLQPLRPHELIPRILGPLSSINPAIAQHSRYHLQPKNFNWIGDSAATGPCSLSMKKSGRHYISSSRVRLTSRKRRKAQHSTKTANGLQSLLIERLPTSSRLKSSGQDLCLQKAKNTETPRVLQHSKILWGSVKTKR.

Positions 1-41 are disordered; sequence MEPNNCKTSESEEDDIEEEESEEECVREESTTPNSTQQALR. Positions 4–30 form a coiled coil; that stretch reads NNCKTSESEEDDIEEEESEEECVREES. Over residues 11-26 the composition is skewed to acidic residues; the sequence is SEEDDIEEEESEEECV. Residues 85–430 form the TTL domain; the sequence is RRPLAINLTN…RGCDKKKVIE (346 aa). ATP is bound by residues lysine 202, 208 to 209, 230 to 233, and 243 to 245; these read QG, QQYI, and KFD. Residue glutamine 208 coordinates a protein. Residue arginine 269 participates in L-glutamate binding. Residue 291 to 292 participates in ATP binding; the sequence is TN. L-glutamate contacts are provided by tyrosine 293 and lysine 311. The Mg(2+) site is built by aspartate 376, glutamate 389, and asparagine 391. Position 392 (histidine 392) interacts with a protein. The tract at residues 401–482 is c-MTBD region; the sequence is RLDREVKDAL…LGGYRRIYPG (82 aa). Lysine 407 contributes to the L-glutamate binding site. Coiled-coil stretches lie at residues 504–541 and 585–609; these read ASKA…KEQN and QDIV…IRSL. Positions 519–556 are disordered; the sequence is IRLKQEQQENPGTKKRKENKEQNQGESAGEKSRSRTAT. The segment covering 536–551 has biased composition (basic and acidic residues); the sequence is ENKEQNQGESAGEKSR.

This sequence belongs to the tubulin--tyrosine ligase family. Mg(2+) is required as a cofactor. In terms of tissue distribution, highly expressed in heart and testis. Expressed in brain, kidney, liver, lung, muscle and trachea. In the brain, expressed in ependymal cilia, cortex, corpus callosum and striatum.

It carries out the reaction (L-glutamyl)(n)-gamma-L-glutamyl-L-glutamyl-[protein] + L-glutamate + ATP = (L-glutamyl)(n+1)-gamma-L-glutamyl-L-glutamyl-[protein] + ADP + phosphate + H(+). Functionally, polyglutamylase which modifies tubulin, generating polyglutamate side chains of variable lengths on the gamma-carboxyl group of specific glutamate residues within the C-terminal tail of tubulin. Mediates ATP-dependent polyglutamate side-chain elongation of the polyglutamylation reaction but not the initiation step. Preferentially modifies the alpha-tubulin tail over a beta-tail. The polypeptide is Tubulin polyglutamylase TTLL13 (Mus musculus (Mouse)).